Consider the following 108-residue polypeptide: MDSLALGRWRQRRAEDLQVPGDVKRVCRRLEASGHERGCHQVNACALASWGPEDRELPSRGCLPAPRPESGQGRLSTGISQNGGRSSAQPCPRCIAGESGHFSHTKNH.

A disordered region spans residues Glu56 to His108. Positions Gly73 to Gln89 are enriched in polar residues.

This is an uncharacterized protein from Homo sapiens (Human).